The chain runs to 221 residues: Uracil-DNA glycosylase 1 (221 aa).

The active-site Proton acceptor is D61.

The protein belongs to the uracil-DNA glycosylase (UDG) superfamily. UNG family.

The protein resides in the cytoplasm. The catalysed reaction is Hydrolyzes single-stranded DNA or mismatched double-stranded DNA and polynucleotides, releasing free uracil.. In terms of biological role, excises uracil residues from the DNA which can arise as a result of misincorporation of dUMP residues by DNA polymerase or due to deamination of cytosine. This is Uracil-DNA glycosylase 1 from Listeria innocua serovar 6a (strain ATCC BAA-680 / CLIP 11262).